Reading from the N-terminus, the 551-residue chain is Structure-specific endonuclease subunit MUS81 (551 aa).

The segment covering 84-93 (HRTSGGDHAP) has biased composition (basic and acidic residues). Residues 84-130 (HRTSGGDHAPDSPSGENSPAPQGRLAEVQDSSMPVPAQPKAGGSGSY) form a disordered region. Phosphoserine occurs at positions 95 and 101. The interaction with BLM stretch occupies residues 125 to 244 (GGSGSYWPAR…PGEETAVPGA (120 aa)). The interval 131–230 (WPARHSGARV…GLSLLNVGIG (100 aa)) is winged helix domain (WHD); critical for endonuclease activity. The ERCC4 domain maps to 270-372 (LLCVDIGETR…RRVYLVEEHG (103 aa)). Residues D274, E277, and D307 contribute to the active site. The Mg(2+) site is built by D274, E277, D307, E333, and R334. Residues 471–545 (VREVFARQLM…LSRTLSQLYC (75 aa)) form a helix-hairpin-helix (2HhH); involved in DNA recognition and bending region.

Belongs to the XPF family. In terms of assembly, part of the heterodimeric DNA structure-specific endonuclease complex MUS81-EME1. Part of the heterodimeric DNA structure-specific endonuclease complex MUS81-EME2. Interacts with BLM; may stimulate the endonuclease activity of MUS81. Interacts with SLX4/BTBD12; this interaction is direct and links the MUS81-EME1 complex to SLX4, which may coordinate the action of the structure-specific endonuclease during DNA repair. Interacts with DCLRE1B/Apollo. Interacts with RECQL5; this interaction stimulates mitotic DNA synthesis. Interacts with CHEK2. The cofactor is Mg(2+). As to expression, widely expressed.

The protein resides in the nucleus. The protein localises to the nucleolus. Its function is as follows. Catalytic subunit of two functionally distinct, structure-specific, heterodimeric DNA endonucleases MUS81-EME1 and MUS81-EME2 that are involved in the maintenance of genome stability. Both endonucleases have essentially the same substrate specificity though MUS81-EME2 is more active than its MUS81-EME1 counterpart. Both cleave 3'-flaps and nicked Holliday junctions, and exhibit limited endonuclease activity with 5' flaps and nicked double-stranded DNAs. MUS81-EME2 which is active during the replication of DNA is more specifically involved in replication fork processing. Replication forks frequently encounter obstacles to their passage, including DNA base lesions, DNA interstrand cross-links, difficult-to-replicate sequences, transcription bubbles, or tightly bound proteins. One mechanism for the restart of a stalled replication fork involves nucleolytic cleavage mediated by the MUS81-EME2 endonuclease. By acting upon the stalled fork, MUS81-EME2 generates a DNA double-strand break (DSB) that can be repaired by homologous recombination, leading to the restoration of an active fork. MUS81-EME2 could also function in telomere maintenance. MUS81-EME1, on the other hand, is active later in the cell cycle and functions in the resolution of mitotic recombination intermediates including the Holliday junctions, the four-way DNA intermediates that form during homologous recombination. This is Structure-specific endonuclease subunit MUS81 from Homo sapiens (Human).